The sequence spans 128 residues: Aspartate 1-decarboxylase (128 aa).

The Schiff-base intermediate with substrate; via pyruvic acid role is filled by serine 25. Serine 25 is modified (pyruvic acid (Ser)). Threonine 57 lines the substrate pocket. Tyrosine 58 (proton donor) is an active-site residue. Substrate is bound at residue 73–75 (GAA).

It belongs to the PanD family. As to quaternary structure, heterooctamer of four alpha and four beta subunits. Requires pyruvate as cofactor. Is synthesized initially as an inactive proenzyme, which is activated by self-cleavage at a specific serine bond to produce a beta-subunit with a hydroxyl group at its C-terminus and an alpha-subunit with a pyruvoyl group at its N-terminus.

It localises to the cytoplasm. It catalyses the reaction L-aspartate + H(+) = beta-alanine + CO2. It participates in cofactor biosynthesis; (R)-pantothenate biosynthesis; beta-alanine from L-aspartate: step 1/1. Functionally, catalyzes the pyruvoyl-dependent decarboxylation of aspartate to produce beta-alanine. The polypeptide is Aspartate 1-decarboxylase (Chlorobium limicola (strain DSM 245 / NBRC 103803 / 6330)).